A 282-amino-acid polypeptide reads, in one-letter code: Bifunctional protein FolD (282 aa).

Residues 160–162 (NRS), serine 185, and isoleucine 228 contribute to the NADP(+) site.

The protein belongs to the tetrahydrofolate dehydrogenase/cyclohydrolase family. Homodimer.

It carries out the reaction (6R)-5,10-methylene-5,6,7,8-tetrahydrofolate + NADP(+) = (6R)-5,10-methenyltetrahydrofolate + NADPH. The catalysed reaction is (6R)-5,10-methenyltetrahydrofolate + H2O = (6R)-10-formyltetrahydrofolate + H(+). It participates in one-carbon metabolism; tetrahydrofolate interconversion. Catalyzes the oxidation of 5,10-methylenetetrahydrofolate to 5,10-methenyltetrahydrofolate and then the hydrolysis of 5,10-methenyltetrahydrofolate to 10-formyltetrahydrofolate. The polypeptide is Bifunctional protein FolD (Cenarchaeum symbiosum (strain A)).